A 227-amino-acid chain; its full sequence is (S)-2-haloacid dehalogenase (227 aa).

Catalysis depends on Asp-10, which acts as the Nucleophile. An (S)-2-haloacid contacts are provided by residues Leu-11–Tyr-12, Arg-41, and Ser-118–Asn-119. The important for catalytic activity stretch occupies residues Ser-175–Asp-180.

Belongs to the HAD-like hydrolase superfamily. S-2-haloalkanoic acid dehalogenase family. As to quaternary structure, homotetramer.

The enzyme catalyses an (S)-2-haloacid + H2O = a (2R)-2-hydroxycarboxylate + a halide anion + H(+). It carries out the reaction (S)-2-chloropropanoate + H2O = (R)-lactate + chloride + H(+). Catalyzes the hydrolytic dehalogenation of small (S)-2-haloalkanoic acids to yield the corresponding (R)-2-hydroxyalkanoic acids. Acts on acids of short chain lengths, C(2) to C(4), with inversion of configuration at C-2. Active with 2-halogenated carboxylic acids and converts only the S-isomer (or L-isomer) of 2-chloropropionic acid with inversion of configuration to produce R-lactate (or D-isomer). The chain is (S)-2-haloacid dehalogenase from Pseudomonas putida (Arthrobacter siderocapsulatus).